Here is a 316-residue protein sequence, read N- to C-terminus: MYSKILGTGSYLPSQIRTNADLEKMVETSDEWIVARTGIKERRIAAENETVADMGFYAAQNAIEMAGIDKNDIDLIIVATTSGSHTFPSSACQVQAKLGIKGCPAFDLAAACSGFVYALSIADQHIKTGMCKNVLVIGSDTLSKTCDPTDRSTIILFGDGAGAVVVGASEEPGILSTHIYADGEFGDLLSLEVPERGKDADKWLHMAGNEVFKVAVTQLSKLVKDTLEANGMHKSELDWLVPHQANYRIISATAKKLSMSLDQVVITLDRHGNTSAATVPTALDEAVRDGRIQRGQTLLLEAFGGGFTWGSALVRF.

Catalysis depends on residues cysteine 112 and histidine 243. Residues 244–248 (QANYR) form an ACP-binding region. The active site involves asparagine 273.

Belongs to the thiolase-like superfamily. FabH family. As to quaternary structure, homodimer.

The protein resides in the cytoplasm. The enzyme catalyses malonyl-[ACP] + acetyl-CoA + H(+) = 3-oxobutanoyl-[ACP] + CO2 + CoA. Its pathway is lipid metabolism; fatty acid biosynthesis. Catalyzes the condensation reaction of fatty acid synthesis by the addition to an acyl acceptor of two carbons from malonyl-ACP. Catalyzes the first condensation reaction which initiates fatty acid synthesis and may therefore play a role in governing the total rate of fatty acid production. Possesses both acetoacetyl-ACP synthase and acetyl transacylase activities. Its substrate specificity determines the biosynthesis of branched-chain and/or straight-chain of fatty acids. The polypeptide is Beta-ketoacyl-[acyl-carrier-protein] synthase III 1 (Vibrio vulnificus (strain YJ016)).